The primary structure comprises 285 residues: Neuralized-like protein 2 (285 aa).

A disordered region spans residues 1–28 (MADPSEHVGLGGPRSPARPEPPPTRFHQ). The 222-residue stretch at 23–244 (PTRFHQVHGA…STKSVRLVQL (222 aa)) folds into the NHR domain. Residues 250–285 (SLQTLCRLVIHKRVVHRLAIDVLHLPKGLKDFCKYE) enclose the SOCS box domain.

Probable component the ECS(NEURL2) E3 ubiquitin-protein ligase complex consisting of ELOB/Elongin B, ELOC/Elongin C, CUL5, RBX1 and NEURL2. Interacts with CTNNB1. Expressed specifically in skeletal and cardiac muscles.

It localises to the cytoplasm. It functions in the pathway protein modification; protein ubiquitination. Functionally, plays an important role in the process of myofiber differentiation and maturation. Probable substrate-recognition component of a SCF-like ECS (Elongin BC-CUL2/5-SOCS-box protein) E3 ubiquitin-protein ligase complex, which mediates the ubiquitination of proteins. Probably contributes to catalysis through recognition and positioning of the substrate and the ubiquitin-conjugating enzyme. During myogenesis, controls the ubiquitination and degradation of the specific pool of CTNNB1/beta-catenin located at the sarcolemma. This is Neuralized-like protein 2 (Neurl2) from Mus musculus (Mouse).